Reading from the N-terminus, the 906-residue chain is Kinesin-like protein KIN-7G (906 aa).

The Kinesin motor domain maps to 26–344; that stretch reads SVAVAVRFRP…LKFAHRAKHI (319 aa). 105-112 contacts ATP; that stretch reads GVTSSGKT. 3 coiled-coil regions span residues 346 to 385, 733 to 814, and 839 to 875; these read IQAT…RTGT, SDEF…GRNQ, and GDMN…LEKE. The disordered stretch occupies residues 803–840; the sequence is RLSSELASGRNQRRGSHGPRGARRESHTKRYEPARRGD. Positions 813 to 823 are enriched in basic residues; that stretch reads NQRRGSHGPRG. Over residues 824 to 840 the composition is skewed to basic and acidic residues; the sequence is ARRESHTKRYEPARRGD.

The protein belongs to the TRAFAC class myosin-kinesin ATPase superfamily. Kinesin family. KIN-7 subfamily.

The protein is Kinesin-like protein KIN-7G of Oryza sativa subsp. japonica (Rice).